A 419-amino-acid polypeptide reads, in one-letter code: Tyrosine--tRNA ligase (419 aa).

Tyr34 is an L-tyrosine binding site. Positions 39 to 48 (PTADSLHLGH) match the 'HIGH' region motif. The L-tyrosine site is built by Tyr169 and Gln173. Residues 229-233 (KFGKS) carry the 'KMSKS' region motif. Lys232 lines the ATP pocket. Positions 352-419 (LNIIDLLVTS…KKKYFVLNFK (68 aa)) constitute an S4 RNA-binding domain.

It belongs to the class-I aminoacyl-tRNA synthetase family. TyrS type 1 subfamily. Homodimer.

The protein localises to the cytoplasm. The enzyme catalyses tRNA(Tyr) + L-tyrosine + ATP = L-tyrosyl-tRNA(Tyr) + AMP + diphosphate + H(+). In terms of biological role, catalyzes the attachment of tyrosine to tRNA(Tyr) in a two-step reaction: tyrosine is first activated by ATP to form Tyr-AMP and then transferred to the acceptor end of tRNA(Tyr). This is Tyrosine--tRNA ligase from Streptococcus agalactiae serotype Ia (strain ATCC 27591 / A909 / CDC SS700).